The sequence spans 502 residues: Probable cytosol aminopeptidase (502 aa).

Lys-269 and Asp-274 together coordinate Mn(2+). The active site involves Lys-281. Positions 292, 351, and 353 each coordinate Mn(2+). The active site involves Arg-355.

Belongs to the peptidase M17 family. It depends on Mn(2+) as a cofactor.

Its subcellular location is the cytoplasm. It catalyses the reaction Release of an N-terminal amino acid, Xaa-|-Yaa-, in which Xaa is preferably Leu, but may be other amino acids including Pro although not Arg or Lys, and Yaa may be Pro. Amino acid amides and methyl esters are also readily hydrolyzed, but rates on arylamides are exceedingly low.. The catalysed reaction is Release of an N-terminal amino acid, preferentially leucine, but not glutamic or aspartic acids.. Functionally, presumably involved in the processing and regular turnover of intracellular proteins. Catalyzes the removal of unsubstituted N-terminal amino acids from various peptides. This chain is Probable cytosol aminopeptidase, found in Shewanella denitrificans (strain OS217 / ATCC BAA-1090 / DSM 15013).